Reading from the N-terminus, the 135-residue chain is Small ribosomal subunit protein uS8 (135 aa).

It belongs to the universal ribosomal protein uS8 family. Part of the 30S ribosomal subunit. Contacts proteins S5 and S12.

Its function is as follows. One of the primary rRNA binding proteins, it binds directly to 16S rRNA central domain where it helps coordinate assembly of the platform of the 30S subunit. The protein is Small ribosomal subunit protein uS8 of Cutibacterium acnes (strain DSM 16379 / KPA171202) (Propionibacterium acnes).